We begin with the raw amino-acid sequence, 161 residues long: Phosphopantetheine adenylyltransferase (161 aa).

A substrate-binding site is contributed by Ser-10. ATP is bound by residues 10–11 (SF) and His-18. Substrate is bound by residues Lys-42, Leu-74, and Arg-88. ATP-binding positions include 88–89 (RG), Glu-99, and 124–130 (YSFLSSS).

This sequence belongs to the bacterial CoaD family. Homohexamer. Requires Mg(2+) as cofactor.

The protein resides in the cytoplasm. It catalyses the reaction (R)-4'-phosphopantetheine + ATP + H(+) = 3'-dephospho-CoA + diphosphate. It functions in the pathway cofactor biosynthesis; coenzyme A biosynthesis; CoA from (R)-pantothenate: step 4/5. In terms of biological role, reversibly transfers an adenylyl group from ATP to 4'-phosphopantetheine, yielding dephospho-CoA (dPCoA) and pyrophosphate. The polypeptide is Phosphopantetheine adenylyltransferase (Bacillus subtilis (strain 168)).